A 189-amino-acid polypeptide reads, in one-letter code: Prostaglandin-H2 D-isomerase (189 aa).

Residues 1 to 24 (MAALRMLWMGLVLLGLLGFPQTPA) form the signal peptide. Q25 carries the post-translational modification Pyrrolidone carboxylic acid. N51 is a glycosylation site (N-linked (GlcNAc...) asparagine). C65 functions as the Nucleophile in the catalytic mechanism. N-linked (GlcNAc...) asparagine glycosylation is present at N78. C89 and C186 form a disulfide bridge.

It belongs to the calycin superfamily. Lipocalin family. In terms of assembly, monomer. As to expression, abundant in the brain and CNS, where it is expressed in tissues of the blood-brain barrier and secreted into the cerebro-spinal fluid. In the male reproductive system, it is expressed in the testis, efferent ducts and epididymis, and is secreted into the seminal fluid. In the eye, it is expressed in the pigmented epithelium of the retina and the nonpigmented epithelium of the ciliary body, and secreted into the aqueous humor. Low levels detected in various tissue fluids such as serum, normal urine, ascitic fluid and tear fluid. Also found in a number of other organs including the ear, heart and lung.

The protein resides in the rough endoplasmic reticulum. It localises to the nucleus membrane. It is found in the golgi apparatus. The protein localises to the cytoplasm. Its subcellular location is the perinuclear region. The protein resides in the secreted. It carries out the reaction prostaglandin H2 = prostaglandin D2. Functionally, catalyzes the conversion of PGH2 to PGD2, a prostaglandin involved in smooth muscle contraction/relaxation and a potent inhibitor of platelet aggregation. Involved in a variety of CNS functions, such as sedation, NREM sleep and PGE2-induced allodynia, and may have an anti-apoptotic role in oligodendrocytes. Binds small non-substrate lipophilic molecules, including biliverdin, bilirubin, retinal, retinoic acid and thyroid hormone, and may act as a scavenger for harmful hydrophobic molecules and as a secretory retinoid and thyroid hormone transporter. Possibly involved in development and maintenance of the blood-brain, blood-retina, blood-aqueous humor and blood-testis barrier. It is likely to play important roles in both maturation and maintenance of the central nervous system and male reproductive system. Involved in PLA2G3-dependent maturation of mast cells. PLA2G3 is secreted by immature mast cells and acts on nearby fibroblasts upstream to PTDGS to synthesize PGD2, which in turn promotes mast cell maturation and degranulation via PTGDR. This chain is Prostaglandin-H2 D-isomerase (Ptgds), found in Mus musculus (Mouse).